The following is a 212-amino-acid chain: ATP phosphoribosyltransferase (212 aa).

It belongs to the ATP phosphoribosyltransferase family. Short subfamily. In terms of assembly, heteromultimer composed of HisG and HisZ subunits.

The protein localises to the cytoplasm. The catalysed reaction is 1-(5-phospho-beta-D-ribosyl)-ATP + diphosphate = 5-phospho-alpha-D-ribose 1-diphosphate + ATP. It functions in the pathway amino-acid biosynthesis; L-histidine biosynthesis; L-histidine from 5-phospho-alpha-D-ribose 1-diphosphate: step 1/9. Functionally, catalyzes the condensation of ATP and 5-phosphoribose 1-diphosphate to form N'-(5'-phosphoribosyl)-ATP (PR-ATP). Has a crucial role in the pathway because the rate of histidine biosynthesis seems to be controlled primarily by regulation of HisG enzymatic activity. This is ATP phosphoribosyltransferase from Clostridium botulinum (strain Langeland / NCTC 10281 / Type F).